The primary structure comprises 895 residues: Probable aminodeoxychorismate synthase, chloroplastic (895 aa).

Positions 1–45 (MAALRLPTPPPPRAPAPWLHSSHRRRVAAPRGAGGGGGGGGAVPP) are disordered. A chloroplast-targeting transit peptide spans 1–48 (MAALRLPTPPPPRAPAPWLHSSHRRRVAAPRGAGGGGGGGGAVPPPPV). The span at 32 to 42 (GAGGGGGGGGA) shows a compositional bias: gly residues. In terms of domain architecture, Glutamine amidotransferase type-1 spans 49–307 (RTLLIDNYDS…KKITTDFGLQ (259 aa)). The active-site Nucleophile is C135. Active-site residues include H281 and E283. The PABB component stretch occupies residues 387–875 (IFSVLFGHHS…KAKAPTKVVE (489 aa)).

It in the C-terminal section; belongs to the anthranilate synthase component I family.

It is found in the plastid. The protein resides in the chloroplast. It catalyses the reaction chorismate + L-glutamine = 4-amino-4-deoxychorismate + L-glutamate. The protein operates within cofactor biosynthesis; tetrahydrofolate biosynthesis; 4-aminobenzoate from chorismate: step 1/2. Its pathway is antibiotic biosynthesis; candicidin biosynthesis. In terms of biological role, bifunctional enzyme that catalyzes the biosynthesis of 4-amino-4-deoxychorismate (ADC) from chorismate and glutamine. In the first step, a glutamine amidotransferase generates ammonia that is channelled between the binding sites of glutamine and chorismate and used along with chorismate in the second step, catalyzed by aminodeoxychorismate synthase, to produce ADC. Required for the synthesis of 4-aminobenzoate (PABA), an important component in tetrahydrofolate biosynthesis. Does not possess ADC lyase activity. This chain is Probable aminodeoxychorismate synthase, chloroplastic (ADCS), found in Oryza sativa subsp. japonica (Rice).